A 156-amino-acid polypeptide reads, in one-letter code: Small ribosomal subunit protein uS7 (156 aa).

This sequence belongs to the universal ribosomal protein uS7 family. Part of the 30S ribosomal subunit. Contacts proteins S9 and S11.

In terms of biological role, one of the primary rRNA binding proteins, it binds directly to 16S rRNA where it nucleates assembly of the head domain of the 30S subunit. Is located at the subunit interface close to the decoding center, probably blocks exit of the E-site tRNA. This is Small ribosomal subunit protein uS7 from Mycoplasmopsis synoviae (strain 53) (Mycoplasma synoviae).